The following is a 197-amino-acid chain: Nucleoside triphosphate pyrophosphatase (197 aa).

The active-site Proton acceptor is Asp-71.

This sequence belongs to the Maf family. It depends on a divalent metal cation as a cofactor.

Its subcellular location is the cytoplasm. The catalysed reaction is a ribonucleoside 5'-triphosphate + H2O = a ribonucleoside 5'-phosphate + diphosphate + H(+). The enzyme catalyses a 2'-deoxyribonucleoside 5'-triphosphate + H2O = a 2'-deoxyribonucleoside 5'-phosphate + diphosphate + H(+). Nucleoside triphosphate pyrophosphatase. May have a dual role in cell division arrest and in preventing the incorporation of modified nucleotides into cellular nucleic acids. In Nostoc punctiforme (strain ATCC 29133 / PCC 73102), this protein is Nucleoside triphosphate pyrophosphatase.